The sequence spans 466 residues: Transcription factor SOX-10 (466 aa).

Disordered regions lie at residues Met-1–Lys-67, Leu-160–Ala-200, Asp-213–Asn-275, Thr-344–Thr-375, and Arg-433–Pro-466. A compositionally biased stretch (low complexity) spans Leu-23–Gly-32. The residue at position 24 (Ser-24) is a Phosphoserine. Residues Glu-62 to Pro-102 form a dimerization (DIM) region. Residues Val-104–Lys-172 constitute a DNA-binding region (HMG box). The segment covering Leu-160–Tyr-173 has biased composition (basic and acidic residues). The segment covering Ala-183–Ala-200 has biased composition (low complexity). Positions Pro-228–Val-310 are transactivation domain (TAM). Residues Ala-254–Ile-271 show a composition bias toward basic and acidic residues. Residues Lys-353 to Pro-466 form a transactivation domain (TAC) region. The segment covering Ser-440 to Pro-466 has biased composition (polar residues).

Monomer. Interacts with Armcx3 at the mitochondrial outer membrane surface. Interacts with PAX3. As to expression, expressed in oligodendroglia of the spinal tube (at protein level).

It localises to the cytoplasm. The protein localises to the nucleus. It is found in the mitochondrion outer membrane. In terms of biological role, transcription factor that plays a central role in developing and mature glia. Specifically activates expression of myelin genes, during oligodendrocyte (OL) maturation, such as DUSP15 and MYRF, thereby playing a central role in oligodendrocyte maturation and CNS myelination. Once induced, MYRF cooperates with SOX10 to implement the myelination program. Transcriptional activator of MITF, acting synergistically with PAX3. Transcriptional activator of MBP, via binding to the gene promoter. This is Transcription factor SOX-10 (Sox10) from Mus musculus (Mouse).